The following is a 137-amino-acid chain: Proofreading thioesterase EntH (137 aa).

Glu-63 functions as the Nucleophile or proton acceptor in the catalytic mechanism.

The protein belongs to the thioesterase PaaI family. In terms of assembly, homotetramer. Dimer of dimers. Interacts specifically with the aryl carrier protein (ArCP) domain of EntB.

Its subcellular location is the cytoplasm. It participates in siderophore biosynthesis; enterobactin biosynthesis. Required for optimal enterobactin synthesis. Acts as a proofreading enzyme that prevents EntB misacylation by hydrolyzing the thioester bound existing between EntB and wrongly charged molecules. In Citrobacter koseri (strain ATCC BAA-895 / CDC 4225-83 / SGSC4696), this protein is Proofreading thioesterase EntH.